Reading from the N-terminus, the 65-residue chain is Large ribosomal subunit protein uL29 (65 aa).

It belongs to the universal ribosomal protein uL29 family.

The chain is Large ribosomal subunit protein uL29 from Dehalococcoides mccartyi (strain ATCC BAA-2266 / KCTC 15142 / 195) (Dehalococcoides ethenogenes (strain 195)).